A 298-amino-acid polypeptide reads, in one-letter code: ATP synthase gamma chain (298 aa).

The protein belongs to the ATPase gamma chain family. F-type ATPases have 2 components, CF(1) - the catalytic core - and CF(0) - the membrane proton channel. CF(1) has five subunits: alpha(3), beta(3), gamma(1), delta(1), epsilon(1). CF(0) has three main subunits: a, b and c.

Its subcellular location is the cell inner membrane. In terms of biological role, produces ATP from ADP in the presence of a proton gradient across the membrane. The gamma chain is believed to be important in regulating ATPase activity and the flow of protons through the CF(0) complex. This is ATP synthase gamma chain from Francisella tularensis subsp. mediasiatica (strain FSC147).